The chain runs to 55 residues: Large ribosomal subunit protein bL33 (55 aa).

It belongs to the bacterial ribosomal protein bL33 family.

The protein is Large ribosomal subunit protein bL33 of Buchnera aphidicola subsp. Schizaphis graminum (strain Sg).